The primary structure comprises 291 residues: Protease HtpX homolog (291 aa).

The next 2 helical transmembrane spans lie at 4–24 (VFLF…SARL) and 38–58 (MGML…ISLL). His-144 contributes to the Zn(2+) binding site. Glu-145 is a catalytic residue. His-148 is a Zn(2+) binding site. Helical transmembrane passes span 159-179 (LIQG…AYAL) and 199-219 (ISSI…VMYF). Glu-224 lines the Zn(2+) pocket.

This sequence belongs to the peptidase M48B family. Requires Zn(2+) as cofactor.

The protein resides in the cell inner membrane. The chain is Protease HtpX homolog from Chlorobium phaeovibrioides (strain DSM 265 / 1930) (Prosthecochloris vibrioformis (strain DSM 265)).